The primary structure comprises 598 residues: DNA primase (598 aa).

Residues 38 to 62 (CPFHDEKTPSFTVSEDKQICHCFGC) form a CHC2-type zinc finger. The Toprim domain occupies 260 to 341 (DEIILLEGFM…NVYVVQLPSG (82 aa)). Glutamate 266, aspartate 310, and aspartate 312 together coordinate Mg(2+).

It belongs to the DnaG primase family. Monomer. Interacts with DnaB. Zn(2+) serves as cofactor. The cofactor is Mg(2+).

It carries out the reaction ssDNA + n NTP = ssDNA/pppN(pN)n-1 hybrid + (n-1) diphosphate.. Functionally, RNA polymerase that catalyzes the synthesis of short RNA molecules used as primers for DNA polymerase during DNA replication. In Staphylococcus epidermidis (strain ATCC 12228 / FDA PCI 1200), this protein is DNA primase.